Consider the following 57-residue polypeptide: UPF0391 membrane protein RPA3505 (57 aa).

The next 2 helical transmembrane spans lie at 4-24 (WVVT…GGIA) and 30-50 (IAKI…VISI).

It belongs to the UPF0391 family.

It localises to the cell membrane. In Rhodopseudomonas palustris (strain ATCC BAA-98 / CGA009), this protein is UPF0391 membrane protein RPA3505.